The chain runs to 175 residues: Protein FAM89A (175 aa).

The tract at residues 141 to 175 (FQEQGSLQDGQHHGSPRDQSPLTHLSSSDWILESI) is disordered. Positions 157-169 (RDQSPLTHLSSSD) are enriched in polar residues.

The protein belongs to the FAM89 family.

The polypeptide is Protein FAM89A (Fam89a) (Mus musculus (Mouse)).